Consider the following 1388-residue polypeptide: ESX-5 secretion system protein EccC5 (1388 aa).

A run of 2 helical transmembrane segments spans residues 38 to 58 and 65 to 85; these read WLIV…AMVF and FGGV…MMMF. 3 FtsK domains span residues 477-679, 855-1049, and 1158-1351; these read GELL…GAAQ, QPPW…EDAK, and LQPV…DPDE. ATP is bound by residues 500–507, 873–880, and 1175–1182; these read GTTGSGKS, GAGGSGKT, and GRRECGRT.

As to quaternary structure, part of the ESX-5 / type VII secretion system (T7SS), which is composed of cytosolic and membrane components. The ESX-5 membrane complex is composed of EccB5, EccC5, EccD5 and EccE5.

The protein localises to the cell inner membrane. Its function is as follows. Part of the ESX-5 specialized secretion system, which is responsible for the secretion of EsxN and a number of PE_PGRS and PPE proteins. This component is essential for ESX-5 complex stability and secretion. This is ESX-5 secretion system protein EccC5 from Mycobacterium marinum (strain ATCC BAA-535 / M).